The following is a 265-amino-acid chain: Mlc titration factor A (265 aa).

Residues histidine 111, histidine 148, histidine 152, and glutamate 211 each coordinate Zn(2+).

Belongs to the MtfA family. In terms of assembly, interacts with Mlc. It depends on Zn(2+) as a cofactor.

The protein resides in the cytoplasm. Functionally, involved in the modulation of the activity of the glucose-phosphotransferase system (glucose-PTS). Interacts with the transcriptional repressor Mlc, preventing its interaction with DNA and leading to the modulation of expression of genes regulated by Mlc, including ptsG, which encodes the PTS system glucose-specific EIICB component. In terms of biological role, shows zinc-dependent metallopeptidase activity. The protein is Mlc titration factor A of Salmonella gallinarum (strain 287/91 / NCTC 13346).